We begin with the raw amino-acid sequence, 59 residues long: Large ribosomal subunit protein bL32 (59 aa).

A compositionally biased stretch (basic residues) spans 1 to 16 (MAVPKRKTSPSKRGMR). The segment at 1–59 (MAVPKRKTSPSKRGMRRSADALKAPTYVEDKNSGELRRPHHIDLKSGMYRGRQVLEAKE) is disordered. Over residues 28 to 44 (VEDKNSGELRRPHHIDL) the composition is skewed to basic and acidic residues.

It belongs to the bacterial ribosomal protein bL32 family.

The sequence is that of Large ribosomal subunit protein bL32 from Brucella anthropi (strain ATCC 49188 / DSM 6882 / CCUG 24695 / JCM 21032 / LMG 3331 / NBRC 15819 / NCTC 12168 / Alc 37) (Ochrobactrum anthropi).